A 921-amino-acid chain; its full sequence is Bifunctional aspartokinase/homoserine dehydrogenase, chloroplastic (921 aa).

A chloroplast-targeting transit peptide spans 1 to 87; it reads SLSSAISPSS…DDSVEKVHLP (87 aa). Residues 88–339 are aspartokinase; that stretch reads RGAMWSIHKF…VSEAVVLKTL (252 aa). Residues 340–567 form an interface region; the sequence is SYQEAWEMSY…LSRTTIAVGI (228 aa). 2 consecutive ACT domains span residues 417–489 and 498–575; these read VEGT…QVAN and TVGQ…LIGA. A homoserine dehydrogenase region spans residues 568–921; that stretch reads VGPGLIGATL…RLASYLGAPS (354 aa). Residue I573 coordinates NAD(+). Residues I573, R605, T654, and K678 each coordinate NADP(+). I573 provides a ligand contact to NADPH. Position 654 (T654) interacts with NAD(+). 2 residues coordinate NADPH: T654 and K678. The Na(+) site is built by E705, V708, A710, and L712. 2 residues coordinate NADP(+): G763 and E766. L-homoserine contacts are provided by E766 and D777. The active-site Proton donor is the K781. G898 contacts NAD(+). G898 lines the NADP(+) pocket. Position 898 (G898) interacts with NADPH.

This sequence in the N-terminal section; belongs to the aspartokinase family. It in the C-terminal section; belongs to the homoserine dehydrogenase family. A metal cation is required as a cofactor.

The protein resides in the plastid. It localises to the chloroplast. It carries out the reaction L-homoserine + NADP(+) = L-aspartate 4-semialdehyde + NADPH + H(+). The enzyme catalyses L-homoserine + NAD(+) = L-aspartate 4-semialdehyde + NADH + H(+). The catalysed reaction is L-aspartate + ATP = 4-phospho-L-aspartate + ADP. Its pathway is amino-acid biosynthesis; L-lysine biosynthesis via DAP pathway; (S)-tetrahydrodipicolinate from L-aspartate: step 1/4. It participates in amino-acid biosynthesis; L-methionine biosynthesis via de novo pathway; L-homoserine from L-aspartate: step 1/3. It functions in the pathway amino-acid biosynthesis; L-methionine biosynthesis via de novo pathway; L-homoserine from L-aspartate: step 3/3. The protein operates within amino-acid biosynthesis; L-threonine biosynthesis; L-threonine from L-aspartate: step 1/5. Its pathway is amino-acid biosynthesis; L-threonine biosynthesis; L-threonine from L-aspartate: step 3/5. Bifunctional aspartate kinase and homoserine dehydrogenase that catalyzes the first and the third steps toward the synthesis of lysine, methionine and threonine from aspartate. This chain is Bifunctional aspartokinase/homoserine dehydrogenase, chloroplastic, found in Daucus carota (Wild carrot).